The following is a 290-amino-acid chain: GTPase Era (290 aa).

The Era-type G domain occupies 2 to 169 (KSGFAAILGR…KNKIYENFSE (168 aa)). A G1 region spans residues 10-17 (GRPSTGKS). 10–17 (GRPSTGKS) contributes to the GTP binding site. The segment at 36 to 40 (QTTRN) is G2. The tract at residues 57 to 60 (DTPG) is G3. GTP-binding positions include 57–61 (DTPGF) and 119–122 (NKVD). Residues 119–122 (NKVD) form a G4 region. Residues 148–150 (ISA) are G5. Residues 200–276 (LKEELPYSLY…NLFLQVKLKK (77 aa)) form the KH type-2 domain.

The protein belongs to the TRAFAC class TrmE-Era-EngA-EngB-Septin-like GTPase superfamily. Era GTPase family. In terms of assembly, monomer.

It localises to the cytoplasm. It is found in the cell inner membrane. Its function is as follows. An essential GTPase that binds both GDP and GTP, with rapid nucleotide exchange. Plays a role in 16S rRNA processing and 30S ribosomal subunit biogenesis and possibly also in cell cycle regulation and energy metabolism. The protein is GTPase Era of Borreliella afzelii (strain PKo) (Borrelia afzelii).